The primary structure comprises 1283 residues: Peroxisomal ATPase PEX1 (1283 aa).

Residues 346-367 are disordered; the sequence is SKTKQNVLSPEKEKQMSEPLDQ. Phosphoserine is present on Ser354. A compositionally biased stretch (basic and acidic residues) spans 355–367; the sequence is PEKEKQMSEPLDQ. ATP contacts are provided by residues 599-606 and 881-888; these read GGKGSGKS and GPPGTGKT. Phosphoserine occurs at positions 1181, 1209, and 1211. Residues 1260–1283 are disordered; the sequence is FQNPKRRKNQSGTMFRPGQKVTLA.

Belongs to the AAA ATPase family. In terms of assembly, homooligomer; homooligomerizes in the cytosol, interaction with PEX6 promotes dissociation of the homooligomer. Interacts with PEX6; forming the PEX1-PEX6 AAA ATPase complex, which is composed of a heterohexamer formed by a trimer of PEX1-PEX6 dimers. Interacts indirectly with PEX26, via its interaction with PEX6.

The protein localises to the cytoplasm. The protein resides in the cytosol. It localises to the peroxisome membrane. The catalysed reaction is ATP + H2O = ADP + phosphate + H(+). Component of the PEX1-PEX6 AAA ATPase complex, a protein dislocase complex that mediates the ATP-dependent extraction of the PEX5 receptor from peroxisomal membranes, an essential step for PEX5 recycling. Specifically recognizes PEX5 monoubiquitinated at 'Cys-11', and pulls it out of the peroxisome lumen through the PEX2-PEX10-PEX12 retrotranslocation channel. Extraction by the PEX1-PEX6 AAA ATPase complex is accompanied by unfolding of the TPR repeats and release of bound cargo from PEX5. The protein is Peroxisomal ATPase PEX1 of Homo sapiens (Human).